A 232-amino-acid polypeptide reads, in one-letter code: Small ribosomal subunit protein uS2 (232 aa).

Belongs to the universal ribosomal protein uS2 family.

The sequence is that of Small ribosomal subunit protein uS2 from Syntrophomonas wolfei subsp. wolfei (strain DSM 2245B / Goettingen).